The sequence spans 342 residues: Phosphate acyltransferase (342 aa).

Belongs to the PlsX family. As to quaternary structure, homodimer. Probably interacts with PlsY.

It localises to the cytoplasm. The enzyme catalyses a fatty acyl-[ACP] + phosphate = an acyl phosphate + holo-[ACP]. It functions in the pathway lipid metabolism; phospholipid metabolism. Functionally, catalyzes the reversible formation of acyl-phosphate (acyl-PO(4)) from acyl-[acyl-carrier-protein] (acyl-ACP). This enzyme utilizes acyl-ACP as fatty acyl donor, but not acyl-CoA. The polypeptide is Phosphate acyltransferase (Shewanella sp. (strain MR-4)).